The primary structure comprises 351 residues: MAITPEKEKALAATMAQIDRKFGKGSIMKMGEASSRLAIEAIPTGSIALDIALGIGGVPRGRVVEIFGPESSGKTTLAQHIIAEAQKMGGVCAFIDAEHAFDPVYAARCGVNIDDLLVSQPDTGEQALEICEMLVRSNAIDVIVIDSVAALVPRAEIEGEMGDSMPGMQARLMSQALRKLSGAISKSRTVVIFINQLRMKIGVMFGSPETTTGGQALKFYASVRLDIRRVETLKQGQEAIGSRVRVKVIKNKVAPPFRQAEFDILANEGISREGNIIDIGTELGIIRKSGAWFYLGEDRLGQGRENVREFLKNNPALTDEIERLIKAQALTNPTVIAPSVDVGDDDAIFEE.

Residue 68–75 (GPESSGKT) coordinates ATP.

This sequence belongs to the RecA family.

It localises to the cytoplasm. In terms of biological role, can catalyze the hydrolysis of ATP in the presence of single-stranded DNA, the ATP-dependent uptake of single-stranded DNA by duplex DNA, and the ATP-dependent hybridization of homologous single-stranded DNAs. It interacts with LexA causing its activation and leading to its autocatalytic cleavage. The polypeptide is Protein RecA (Chloroflexus aurantiacus (strain ATCC 29364 / DSM 637 / Y-400-fl)).